A 143-amino-acid chain; its full sequence is Transcription antitermination protein NusB (143 aa).

The protein belongs to the NusB family.

In terms of biological role, involved in transcription antitermination. Required for transcription of ribosomal RNA (rRNA) genes. Binds specifically to the boxA antiterminator sequence of the ribosomal RNA (rrn) operons. The sequence is that of Transcription antitermination protein NusB from Anaeromyxobacter sp. (strain Fw109-5).